A 485-amino-acid chain; its full sequence is Vacuolar fusion protein CCZ1 homolog (485 aa).

It belongs to the CCZ1 family. As to quaternary structure, component of the Mon1-Ccz1 guanyl-nucleotide exchange factor complex made up of Mon1, Ccz1 and Bulli; the interaction of Bulli with the Mon1-Ccz1 heterodimer is mediated via the C-terminal Mic1 domain of Bulli. Mon1 and Ccz1 form a stable complex which displays Rab7 GEF activity with or without Bulli; GEF activity is enhanced by Bulli possibly by improving membrane association of the complex. Interacts with Rab5 and Rab7; preferentially binds GTP-bound Rab5 and GDP-bound Rab7.

The protein localises to the cytoplasm. Its subcellular location is the cytosol. The Rab7 guanyl-nucleotide exchange factor (GEF) activity of the Mon1-Ccz1 complex is autoinhibited by the N-terminal disordered region of Mon1. GEF activity is stimulated by Rab5-mediated recruitment to membranes. In terms of biological role, part of the Mon1-Ccz1 guanyl-nucleotide exchange factor complex specific for Rab7 that promotes the exchange of GDP to GTP, converting Rab7 from an inactive GDP-bound form into an active GTP-bound form. Required for recruitment of Rab7 to endosomal and autophagosomal membranes to mediate endolysosomal and autolysosomal vesicle maturation. Required for fusion of multivesicular bodies and lysosomes but not their formation or trafficking. Involved in the replacement of Rab5 (and possibly Rab4) with Rab7, also known as Rab conversion or the Rab cascade, during endosomal maturation. The Mon1-Ccz1 complex is recruited to phosphatidylinositol 3-phosphate (PtdIns[3]P) enriched membranes by Rab5, which stimulates recruitment and guanyl-nucleotide exchange of Rab7. Together with Rab7 required for autolysosome formation in fat cells and autophagic degradation during starvation-induced basal and developmental autophagy. This chain is Vacuolar fusion protein CCZ1 homolog, found in Drosophila melanogaster (Fruit fly).